The sequence spans 238 residues: Small ribosomal subunit protein uS2 (238 aa).

The protein belongs to the universal ribosomal protein uS2 family.

The sequence is that of Small ribosomal subunit protein uS2 from Moorella thermoacetica (strain ATCC 39073 / JCM 9320).